A 198-amino-acid polypeptide reads, in one-letter code: Imidazoleglycerol-phosphate dehydratase (198 aa).

This sequence belongs to the imidazoleglycerol-phosphate dehydratase family.

It localises to the cytoplasm. The catalysed reaction is D-erythro-1-(imidazol-4-yl)glycerol 3-phosphate = 3-(imidazol-4-yl)-2-oxopropyl phosphate + H2O. Its pathway is amino-acid biosynthesis; L-histidine biosynthesis; L-histidine from 5-phospho-alpha-D-ribose 1-diphosphate: step 6/9. This chain is Imidazoleglycerol-phosphate dehydratase, found in Gluconobacter oxydans (strain 621H) (Gluconobacter suboxydans).